The primary structure comprises 531 residues: Polygalacturonase (531 aa).

Positions 1-23 (MILSHRYTLIALAAAILSSGAHA) are cleaved as a signal peptide. Residue Asp307 is the Proton donor of the active site. Residue His333 is part of the active site. Residues 518 to 531 (AFVPLKSVAPTSPI) are required for PGA export across the outer membrane and catalytic activity.

The protein belongs to the glycosyl hydrolase 28 family. Monomer.

Its subcellular location is the secreted. It carries out the reaction (1,4-alpha-D-galacturonosyl)n+m + H2O = (1,4-alpha-D-galacturonosyl)n + (1,4-alpha-D-galacturonosyl)m.. Contributes to the wilt disease production on tomato. The polypeptide is Polygalacturonase (pglA) (Ralstonia nicotianae (strain ATCC BAA-1114 / GMI1000) (Ralstonia solanacearum)).